The chain runs to 477 residues: Protein RdxB (477 aa).

Residues 1–29 (MTSPDTQTSSLYAKREPVFPKRVSGKFRS) are Cytoplasmic-facing. The helical transmembrane segment at 30-50 (LKWWIMGVTLGIYYIAPWLRW) threads the bilayer. The Periplasmic segment spans residues 51–81 (DRGPNLPDQAILVDLANRRFFFFMIEIWPHE). A helical membrane pass occupies residues 82 to 102 (FYFVAGLLIMAGLGLFLFTSA). The Cytoplasmic portion of the chain corresponds to 103-154 (AGRVWCGYACPQTVWTDLFILVERWVEGDRNARIRLLRQRWDLEKTRKYLTK). A helical membrane pass occupies residues 155–175 (WTLWLLIGLATGGAWVFYFTD). At 176–189 (APTLLVDLLTGNAH) the chain is on the periplasmic side. Residues 190 to 210 (PVAYITMATLTATTFAFGGFA) traverse the membrane as a helical segment. Over 211–338 (REQICIYACP…SAWRHVFRLR (128 aa)) the chain is Cytoplasmic. The 29-residue stretch at 253–281 (EPLSPDQGDCIDCMACVNVCPMGIDIRDG) folds into the 4Fe-4S ferredoxin-type domain. C262, C265, C268, C272, C286, C289, C292, and C296 together coordinate [4Fe-4S] cluster. Residues 339 to 359 (TLIYTALWSGVGLALIVALFL) form a helical membrane-spanning segment. At 360-477 (RSPIDINVTP…HDTIFNGRGN (118 aa)) the chain is on the periplasmic side.

Requires [4Fe-4S] cluster as cofactor.

It is found in the cell membrane. Functionally, involved in a membrane generated redox signal; required to maintain repression of photosynthesis gene expression in the presence of oxygen. This is Protein RdxB (rdxB) from Cereibacter sphaeroides (strain ATCC 17023 / DSM 158 / JCM 6121 / CCUG 31486 / LMG 2827 / NBRC 12203 / NCIMB 8253 / ATH 2.4.1.) (Rhodobacter sphaeroides).